Here is a 346-residue protein sequence, read N- to C-terminus: tRNA (guanine-N(7)-)-methyltransferase (346 aa).

S-adenosyl-L-methionine-binding positions include Gly101 and Glu124–Ile125. Residues Leu149 to Val191 are disordered. The segment covering Ser171–Ser182 has biased composition (low complexity). Residues Asn204–Thr205 and Cys224 each bind S-adenosyl-L-methionine. Asp227 is an active-site residue. Thr318–Glu320 serves as a coordination point for S-adenosyl-L-methionine.

Belongs to the class I-like SAM-binding methyltransferase superfamily. TrmB family. As to quaternary structure, forms a complex with trm82.

The protein localises to the nucleus. The enzyme catalyses guanosine(46) in tRNA + S-adenosyl-L-methionine = N(7)-methylguanosine(46) in tRNA + S-adenosyl-L-homocysteine. Its pathway is tRNA modification; N(7)-methylguanine-tRNA biosynthesis. Functionally, catalyzes the formation of N(7)-methylguanine at position 46 (m7G46) in tRNA. In Aspergillus terreus (strain NIH 2624 / FGSC A1156), this protein is tRNA (guanine-N(7)-)-methyltransferase (trm8).